A 167-amino-acid polypeptide reads, in one-letter code: Urease accessory protein UreE (167 aa).

The interval 137–167 (ARGAYHAHGGHSHGHDHGHSHGHDHHDHSHD) is disordered. Residues 149–167 (HGHDHGHSHGHDHHDHSHD) are compositionally biased toward basic and acidic residues.

It belongs to the UreE family.

The protein localises to the cytoplasm. Involved in urease metallocenter assembly. Binds nickel. Probably functions as a nickel donor during metallocenter assembly. This chain is Urease accessory protein UreE, found in Rhizobium rhizogenes (strain K84 / ATCC BAA-868) (Agrobacterium radiobacter).